A 229-amino-acid polypeptide reads, in one-letter code: Auxin-responsive protein IAA17 (229 aa).

Residues 14–18 (LCLGL) carry the EAR-like (transcriptional repression) motif. Residues 110-211 (AAFVKVSMDG…TCKRLRLMKG (102 aa)) enclose the PB1 domain.

The protein belongs to the Aux/IAA family. In terms of assembly, homodimers and heterodimers. Interacts with the auxin response factors ARF1 and IAA24. Interacts with IAA1. Interacts with TPL. Interacts (via PB1 domain) with ARF7 (via PB1 domain). In terms of processing, phosphorylated by phytochrome A in vitro.

The protein localises to the nucleus. In terms of biological role, aux/IAA proteins are short-lived transcriptional factors that function as repressors of early auxin response genes at low auxin concentrations. Repression is thought to result from the interaction with auxin response factors (ARFs), proteins that bind to the auxin-responsive promoter element (AuxRE). Formation of heterodimers with ARF proteins may alter their ability to modulate early auxin response genes expression. The sequence is that of Auxin-responsive protein IAA17 (IAA17) from Arabidopsis thaliana (Mouse-ear cress).